We begin with the raw amino-acid sequence, 405 residues long: GTPase Obg (405 aa).

The Obg domain occupies 1–159; that stretch reads MKFVDEVSIF…RDLKLELKVL (159 aa). Positions 127–148 are disordered; that stretch reads NTRFKSSTNRAPRQTTPGKPGE. Polar residues predominate over residues 129–143; that stretch reads RFKSSTNRAPRQTTP. One can recognise an OBG-type G domain in the interval 160 to 333; that stretch reads ADVGLLGLPN…LCQDIMHYLD (174 aa). Residues 166–173, 191–195, 213–216, 283–286, and 314–316 each bind GTP; these read GLPNAGKS, FTTLV, DIPG, NKAD, and SAL. The Mg(2+) site is built by Ser-173 and Thr-193. A compositionally biased stretch (acidic residues) spans 383 to 398; the sequence is ALEDEDDFDDEDDGDG. The segment at 383–405 is disordered; sequence ALEDEDDFDDEDDGDGPEIFYVR.

The protein belongs to the TRAFAC class OBG-HflX-like GTPase superfamily. OBG GTPase family. As to quaternary structure, monomer. It depends on Mg(2+) as a cofactor.

Its subcellular location is the cytoplasm. Its function is as follows. An essential GTPase which binds GTP, GDP and possibly (p)ppGpp with moderate affinity, with high nucleotide exchange rates and a fairly low GTP hydrolysis rate. Plays a role in control of the cell cycle, stress response, ribosome biogenesis and in those bacteria that undergo differentiation, in morphogenesis control. This is GTPase Obg from Azotobacter vinelandii (strain DJ / ATCC BAA-1303).